A 356-amino-acid polypeptide reads, in one-letter code: 7,8-didemethyl-8-hydroxy-5-deazariboflavin synthase (356 aa).

In terms of domain architecture, Radical SAM core spans 40–280; it reads ITYSKNVFIP…KDISIQVPPN (241 aa). [4Fe-4S] cluster contacts are provided by cysteine 54, cysteine 58, and cysteine 61.

It belongs to the radical SAM superfamily. CofG family. In terms of assembly, consists of two subunits, CofG and CofH. [4Fe-4S] cluster serves as cofactor.

It carries out the reaction 5-amino-5-(4-hydroxybenzyl)-6-(D-ribitylimino)-5,6-dihydrouracil + S-adenosyl-L-methionine = 7,8-didemethyl-8-hydroxy-5-deazariboflavin + 5'-deoxyadenosine + L-methionine + NH4(+) + H(+). The protein operates within cofactor biosynthesis; coenzyme F0 biosynthesis. Its function is as follows. Catalyzes the radical-mediated synthesis of 7,8-didemethyl-8-hydroxy-5-deazariboflavin from 5-amino-5-(4-hydroxybenzyl)-6-(D-ribitylimino)-5,6-dihydrouracil. In Methanococcus aeolicus (strain ATCC BAA-1280 / DSM 17508 / OCM 812 / Nankai-3), this protein is 7,8-didemethyl-8-hydroxy-5-deazariboflavin synthase.